We begin with the raw amino-acid sequence, 783 residues long: MIVLRDSSDYSDSEVDLPSIEVNGERGNVPTSVLCNVEGSLLNSNPALRQPNLKCIKHNQDVENTTFQLDLRGCRVPSSQPQVITELENNIDIPKNIDAMQNWIFPQTQQYRNYQKEFCEQALFHNLLLALPTGLGKTFIAAVVMLNYFRWFPESKIIFLAPTKPLLLQQRVACSNVAGMSPGATAELNGEVSPDRRLFEYNTKRVFFMTPQTLQNDLKEHLLDAKSIICLIFDEAHRATGNHSYAQVMRAVLRSNSHFRVLGLTATPGSSTASVQKVVDCLHISKLIVRNEESIDIRSYVFHKKIQLIKVTISSEMNILKSDFANLYRPYFNFLRQKKLIPINCECLNIKAYTLFVSLRKYSFSSKNVQSKEKSKIMSCFTLLISCAHITYLLDCHGIIQFYQKLVETKNKAEGKGSGQSFWLFTSKPFAFYLEHLHNKIQGLSLNHPKMNHLLELLKEHFKDTSEGYQNQRVMIFTEFRNTAEYITTTLLAIRPMVRASLFIGQANSAYSTGMNQMQQKETIDQFRAGVINTLVATSIGEEGLDIGDTDMIICYDASSSPIRTIQRMGRTGRKKSGKVFVLLTEDCEDSKWERSQVSYRRVQKVIESGKKIALKKDVPRLIPSNIQPIFKFQALQNNADATLILNSYNNNSSSLSPVNTLANQAHSRSKRYLPFIVDDVFEDMESNLRVPTEDAKIKRFKSDYRSCIYNARRNVFSKPTYMGDKLTKFAKVPHSLLTLSIYRRGRLLQQCSPSSVTKYLKYEEKFKRKRMKKTSNALFQST.

Positions 118 to 286 (FCEQALFHNL…KVVDCLHISK (169 aa)) constitute a Helicase ATP-binding domain. 131-138 (LPTGLGKT) is a binding site for ATP. Residues 234 to 237 (DEAH) carry the DEAH box motif. A Helicase C-terminal domain is found at 450 to 619 (KMNHLLELLK…GKKIALKKDV (170 aa)).

The protein belongs to the DEAD box helicase family. DEAH subfamily. FANCM sub-subfamily.

The protein resides in the nucleus. Its subcellular location is the nucleolus. The catalysed reaction is ATP + H2O = ADP + phosphate + H(+). In Schizosaccharomyces pombe (strain 972 / ATCC 24843) (Fission yeast), this protein is Putative ATP-dependent DNA helicase fml2.